Reading from the N-terminus, the 838-residue chain is Ras-interacting protein RIP3 (838 aa).

Disordered stretches follow at residues 66–97, 157–290, and 305–336; these read VSTS…QQQA, KPTT…TSPK, and NSKT…QQQA. Low complexity-rich tracts occupy residues 67–97, 157–241, and 248–284; these read STSN…QQQA, KPTT…QQKP, and PQNI…QQQQ. Over residues 310-321 the composition is skewed to basic and acidic residues; it reads QKSDKTSEKENK. Residues 441 to 515 form the CRIM domain; the sequence is QLKVRVIEKA…KDEVLVLCPN (75 aa). Disordered regions lie at residues 522 to 581 and 594 to 646; these read KSSS…QQTQ and QQQQ…GPDA. Low complexity-rich tracts occupy residues 537–556, 563–581, and 594–620; these read NNNN…SNNN, QPQQ…QQTQ, and QQQQ…QPDQ. A compositionally biased stretch (gly residues) spans 621–631; it reads VGGGGGGGGGN. Residues 648–717 enclose the RBD domain; the sequence is LVVKITLPDS…GGADLILVSR (70 aa).

Belongs to the SIN1 family. As to quaternary structure, interacts with activated RasG. Part of a complex, TORC2, consisting of tor, lst8, piaA and ripA. Additional proteins, such as 14-3-3 and heat-shock proteins, may also belong to the TORC2 complex.

Component of a Ras-regulated pathway involved in integrating chemotaxis and signal relay pathways that are essential for aggregation. The chain is Ras-interacting protein RIP3 (ripA) from Dictyostelium discoideum (Social amoeba).